Reading from the N-terminus, the 116-residue chain is uncharacterized protein (116 aa).

This is an uncharacterized protein from Escherichia coli (strain K12).